Reading from the N-terminus, the 439-residue chain is Proline--tRNA ligase (439 aa).

Belongs to the class-II aminoacyl-tRNA synthetase family. ProS type 2 subfamily. Homodimer.

The protein resides in the cytoplasm. It catalyses the reaction tRNA(Pro) + L-proline + ATP = L-prolyl-tRNA(Pro) + AMP + diphosphate. Functionally, catalyzes the attachment of proline to tRNA(Pro) in a two-step reaction: proline is first activated by ATP to form Pro-AMP and then transferred to the acceptor end of tRNA(Pro). The polypeptide is Proline--tRNA ligase (Rhodopseudomonas palustris (strain HaA2)).